The sequence spans 174 residues: Chaperonin-like RBCX protein 1, chloroplastic (174 aa).

The transit peptide at M1 to N45 directs the protein to the chloroplast.

It belongs to the RbcX family. In terms of assembly, homodimer. Interacts with rbcL, atpB and THI1.

Its subcellular location is the plastid. The protein localises to the chloroplast. Its function is as follows. Chaperone involved in RuBisCO assembly process. This is Chaperonin-like RBCX protein 1, chloroplastic from Arabidopsis thaliana (Mouse-ear cress).